The following is a 255-amino-acid chain: Small ribosomal subunit protein uS10m (255 aa).

The transit peptide at 1–32 (MALPAARSALSARAFIRPAAALNAAASSSRYL) directs the protein to the mitochondrion. Disordered stretches follow at residues 30–52 (RYLS…NSET) and 220–255 (SEGE…AKSS). The span at 236–255 (DAAREEKPAEKLKEEEAKSS) shows a compositional bias: basic and acidic residues.

The protein belongs to the universal ribosomal protein uS10 family. Part of the mitochondrial small ribosomal subunit.

It localises to the mitochondrion. Involved in mitochondrial genome encoded proteins translation. Involved in the binding of tRNA to the ribosomes. In Cryptococcus neoformans var. neoformans serotype D (strain B-3501A) (Filobasidiella neoformans), this protein is Small ribosomal subunit protein uS10m (RSM10).